A 311-amino-acid chain; its full sequence is 4-hydroxy-3-methylbut-2-enyl diphosphate reductase (311 aa).

Cysteine 12 contributes to the [4Fe-4S] cluster binding site. Residues histidine 41 and histidine 74 each coordinate (2E)-4-hydroxy-3-methylbut-2-enyl diphosphate. Positions 41 and 74 each coordinate dimethylallyl diphosphate. Residues histidine 41 and histidine 74 each coordinate isopentenyl diphosphate. Residue cysteine 96 coordinates [4Fe-4S] cluster. Position 124 (histidine 124) interacts with (2E)-4-hydroxy-3-methylbut-2-enyl diphosphate. Histidine 124 lines the dimethylallyl diphosphate pocket. Histidine 124 serves as a coordination point for isopentenyl diphosphate. Glutamate 126 (proton donor) is an active-site residue. Threonine 168 is a binding site for (2E)-4-hydroxy-3-methylbut-2-enyl diphosphate. Cysteine 198 lines the [4Fe-4S] cluster pocket. (2E)-4-hydroxy-3-methylbut-2-enyl diphosphate is bound by residues serine 226, serine 227, asparagine 228, and serine 270. Serine 226, serine 227, asparagine 228, and serine 270 together coordinate dimethylallyl diphosphate. Isopentenyl diphosphate is bound by residues serine 226, serine 227, asparagine 228, and serine 270.

Belongs to the IspH family. [4Fe-4S] cluster is required as a cofactor.

It carries out the reaction isopentenyl diphosphate + 2 oxidized [2Fe-2S]-[ferredoxin] + H2O = (2E)-4-hydroxy-3-methylbut-2-enyl diphosphate + 2 reduced [2Fe-2S]-[ferredoxin] + 2 H(+). The enzyme catalyses dimethylallyl diphosphate + 2 oxidized [2Fe-2S]-[ferredoxin] + H2O = (2E)-4-hydroxy-3-methylbut-2-enyl diphosphate + 2 reduced [2Fe-2S]-[ferredoxin] + 2 H(+). Its pathway is isoprenoid biosynthesis; dimethylallyl diphosphate biosynthesis; dimethylallyl diphosphate from (2E)-4-hydroxy-3-methylbutenyl diphosphate: step 1/1. It participates in isoprenoid biosynthesis; isopentenyl diphosphate biosynthesis via DXP pathway; isopentenyl diphosphate from 1-deoxy-D-xylulose 5-phosphate: step 6/6. In terms of biological role, catalyzes the conversion of 1-hydroxy-2-methyl-2-(E)-butenyl 4-diphosphate (HMBPP) into a mixture of isopentenyl diphosphate (IPP) and dimethylallyl diphosphate (DMAPP). Acts in the terminal step of the DOXP/MEP pathway for isoprenoid precursor biosynthesis. In Saccharophagus degradans (strain 2-40 / ATCC 43961 / DSM 17024), this protein is 4-hydroxy-3-methylbut-2-enyl diphosphate reductase.